We begin with the raw amino-acid sequence, 124 residues long: Small ribosomal subunit protein uS13 (124 aa).

A disordered region spans residues 95 to 124 (GLPVRGQRTRHNARTRKGPRKTVGAKKGKR). Over residues 101 to 124 (QRTRHNARTRKGPRKTVGAKKGKR) the composition is skewed to basic residues.

It belongs to the universal ribosomal protein uS13 family. As to quaternary structure, part of the 30S ribosomal subunit. Forms a loose heterodimer with protein S19. Forms two bridges to the 50S subunit in the 70S ribosome.

Located at the top of the head of the 30S subunit, it contacts several helices of the 16S rRNA. In the 70S ribosome it contacts the 23S rRNA (bridge B1a) and protein L5 of the 50S subunit (bridge B1b), connecting the 2 subunits; these bridges are implicated in subunit movement. Contacts the tRNAs in the A and P-sites. This Coprothermobacter proteolyticus (strain ATCC 35245 / DSM 5265 / OCM 4 / BT) protein is Small ribosomal subunit protein uS13.